The chain runs to 501 residues: Pentatricopeptide repeat-containing protein At4g16470 (501 aa).

PPR repeat units lie at residues 107–141, 142–172, 173–207, 208–242, 243–273, 274–308, 309–344, and 345–379; these read EPET…GFAL, NEYL…LKIR, DLIP…RIVP, DQYT…CIKS, NIIV…LSTR, NVIT…GCRP, NPVT…GIEP, and EGQH…EHPP. The interval 380-455 is type E motif; that stretch reads VWGSLLGACR…DPGYSQIELQ (76 aa). The type E(+) motif stretch occupies residues 456 to 486; the sequence is GEVHRFMKDDTSHRLSEKIYKKVHEMTSFFM.

The protein belongs to the PPR family. PCMP-E subfamily.

This is Pentatricopeptide repeat-containing protein At4g16470 (PCMP-E12) from Arabidopsis thaliana (Mouse-ear cress).